The following is a 363-amino-acid chain: Peptide chain release factor 1 (363 aa).

At Q237 the chain carries N5-methylglutamine. Over residues 287–299 the composition is skewed to basic and acidic residues; the sequence is EQHKEQASTRKEL. Residues 287 to 306 form a disordered region; that stretch reads EQHKEQASTRKELIGSGDRS.

Belongs to the prokaryotic/mitochondrial release factor family. Methylated by PrmC. Methylation increases the termination efficiency of RF1.

The protein resides in the cytoplasm. In terms of biological role, peptide chain release factor 1 directs the termination of translation in response to the peptide chain termination codons UAG and UAA. The polypeptide is Peptide chain release factor 1 (Ruthia magnifica subsp. Calyptogena magnifica).